The primary structure comprises 189 residues: dCTP deaminase (189 aa).

Residues 112 to 117 (KSTYAR), 136 to 138 (TLE), Gln-157, Tyr-171, and Gln-181 contribute to the dCTP site. Catalysis depends on Glu-138, which acts as the Proton donor/acceptor.

The protein belongs to the dCTP deaminase family. In terms of assembly, homotrimer.

It catalyses the reaction dCTP + H2O + H(+) = dUTP + NH4(+). The protein operates within pyrimidine metabolism; dUMP biosynthesis; dUMP from dCTP (dUTP route): step 1/2. Its function is as follows. Catalyzes the deamination of dCTP to dUTP. The polypeptide is dCTP deaminase (Albidiferax ferrireducens (strain ATCC BAA-621 / DSM 15236 / T118) (Rhodoferax ferrireducens)).